The sequence spans 367 residues: Glutamate 5-kinase 2 (367 aa).

Residue Lys10 coordinates ATP. Residues Ser50, Asp136, and Asn148 each contribute to the substrate site. ATP-binding positions include 168-169 and 210-216; these read TD and TGGMATK. A PUA domain is found at 275–353; that stretch reads SGQIVIDAGA…KQIGELLDYD (79 aa).

This sequence belongs to the glutamate 5-kinase family.

Its subcellular location is the cytoplasm. It catalyses the reaction L-glutamate + ATP = L-glutamyl 5-phosphate + ADP. It functions in the pathway amino-acid biosynthesis; L-proline biosynthesis; L-glutamate 5-semialdehyde from L-glutamate: step 1/2. In terms of biological role, catalyzes the transfer of a phosphate group to glutamate to form L-glutamate 5-phosphate. This Pseudoalteromonas translucida (strain TAC 125) protein is Glutamate 5-kinase 2.